The following is a 297-amino-acid chain: Lipoprotein NlpD/LppB homolog (297 aa).

An N-terminal signal peptide occupies residues 1 to 22 (MDKGEGLRLAATLRQWTRLYGG). The N-palmitoyl cysteine moiety is linked to residue Cys23. Residue Cys23 is the site of S-diacylglycerol cysteine attachment. In terms of domain architecture, LysM spans 67-111 (GQYIVRRGDTLYSIAFRFGWDWKALAARNGIAPPYTIQVGQAIQF). The interval 134–168 (TKPTPVPPAVSTSVPAKPAPAPASTTTPPSSGATP) is disordered.

This sequence belongs to the E.coli NlpD/Haemophilus LppB family.

Its subcellular location is the cell inner membrane. The sequence is that of Lipoprotein NlpD/LppB homolog from Pseudomonas aeruginosa (strain ATCC 15692 / DSM 22644 / CIP 104116 / JCM 14847 / LMG 12228 / 1C / PRS 101 / PAO1).